The following is a 782-amino-acid chain: E3 ubiquitin-protein ligase SopA (782 aa).

Positions 137-171 (VSVSANNRPTVSEGRTPPVSPSLSLQATSSPSSPA) are disordered. Low complexity predominate over residues 157-171 (PSLSLQATSSPSSPA). C753 (glycyl thioester intermediate) is an active-site residue.

Belongs to the SopA E3 ligase family. In terms of processing, ubiquitinated in the presence of host E1 ubiquitin-activating enzyme, E2 ubiquitin-conjugating enzyme and ubiquitin.

The protein resides in the secreted. It localises to the host cell. The catalysed reaction is S-ubiquitinyl-[E2 ubiquitin-conjugating enzyme]-L-cysteine + [acceptor protein]-L-lysine = [E2 ubiquitin-conjugating enzyme]-L-cysteine + N(6)-ubiquitinyl-[acceptor protein]-L-lysine.. Effector proteins function to alter host cell physiology and promote bacterial survival in host tissues. This protein is an E3 ubiquitin ligase that interferes with host's ubiquitination pathway. This Salmonella dublin (strain CT_02021853) protein is E3 ubiquitin-protein ligase SopA (sopA).